A 290-amino-acid polypeptide reads, in one-letter code: Sodium/potassium-transporting ATPase subunit beta-2 (290 aa).

Over 1–39 (MVIQKEKKSCGQVVEEWKEFVWNPRTHQFMGRTGTSWAF) the chain is Cytoplasmic. Residues 40–67 (ILLFYLVFYGFLTAMFTLTMWVMLQTVS) form a helical; Signal-anchor for type II membrane protein membrane-spanning segment. At 68–290 (DHTPKYQDRL…VAFKLRINKA (223 aa)) the chain is on the extracellular side. Residues N96 and N118 are each glycosylated (N-linked (GlcNAc...) asparagine). C129 and C150 are joined by a disulfide. 2 N-linked (GlcNAc...) asparagine glycosylation sites follow: N153 and N159. A disulfide bridge links C160 with C177. N-linked (GlcNAc...) asparagine glycans are attached at residues N193, N197, and N238. The tract at residues 193 to 290 (NQSMNVTCVG…VAFKLRINKA (98 aa)) is immunoglobulin-like. Residues C200 and C261 are joined by a disulfide bond.

The protein belongs to the X(+)/potassium ATPases subunit beta family. The sodium/potassium-transporting ATPase is composed of a catalytic alpha subunit, an auxiliary non-catalytic beta subunit and an additional regulatory subunit. Interacts with isoform 2 of BSG. Highly expressed in brain (at protein level).

The protein localises to the cell membrane. Functionally, this is the non-catalytic component of the active enzyme, which catalyzes the hydrolysis of ATP coupled with the exchange of Na(+) and K(+) ions across the plasma membrane. The exact function of the beta-2 subunit is not known. Its function is as follows. Mediates cell adhesion of neurons and astrocytes, and promotes neurite outgrowth. This Rattus norvegicus (Rat) protein is Sodium/potassium-transporting ATPase subunit beta-2 (Atp1b2).